Consider the following 129-residue polypeptide: Membrane protein 0 (129 aa).

The interval 1-25 is disordered; the sequence is MATVHYSRRPGTPPVTLTSSPSMDD. Positions 44-47 match the PPXY motif motif; that stretch reads PPPY. The chain crosses the membrane as a helical span at residues 100-120; the sequence is FLILFGILTLTAVVVAIVAVF.

It belongs to the varicellovirus ORF0 protein family. In terms of assembly, interacts with host ITCH; this interaction probably mediates ITCH degradation.

Its subcellular location is the host Golgi apparatus membrane. In Homo sapiens (Human), this protein is Membrane protein 0.